A 513-amino-acid polypeptide reads, in one-letter code: Lysine--tRNA ligase (513 aa).

Positions 423 and 430 each coordinate Mg(2+).

Belongs to the class-II aminoacyl-tRNA synthetase family. Homodimer. Mg(2+) serves as cofactor.

The protein resides in the cytoplasm. It carries out the reaction tRNA(Lys) + L-lysine + ATP = L-lysyl-tRNA(Lys) + AMP + diphosphate. The sequence is that of Lysine--tRNA ligase from Anaeromyxobacter dehalogenans (strain 2CP-C).